Consider the following 167-residue polypeptide: Protein MIX23 (167 aa).

Positions 81 to 108 (QLDQDRNTSKSPLKSQQQLPSSSTTQVS) are disordered. Residues 89–106 (SKSPLKSQQQLPSSSTTQ) show a composition bias toward low complexity.

The protein belongs to the MIX23 family.

The sequence is that of Protein MIX23 (cid2) from Schizosaccharomyces pombe (strain 972 / ATCC 24843) (Fission yeast).